The chain runs to 38 residues: Beta-galactosidase (38 aa).

It belongs to the glycosyl hydrolase 35 family. As to quaternary structure, heterodimer of a large and a small subunit. The small subunit is N-glycosylated.

The catalysed reaction is Hydrolysis of terminal non-reducing beta-D-galactose residues in beta-D-galactosides.. Its function is as follows. Involved in cell wall degradation. Degrades polysaccharides containing beta-(1--&gt;4)-linked galactans, acting as an exo-(1--&gt;4)-beta-D-galactanase. This chain is Beta-galactosidase, found in Hordeum vulgare (Barley).